The following is a 155-amino-acid chain: S-ribosylhomocysteine lyase (155 aa).

His58, His62, and Cys125 together coordinate Fe cation.

Belongs to the LuxS family. In terms of assembly, homodimer. It depends on Fe cation as a cofactor.

It catalyses the reaction S-(5-deoxy-D-ribos-5-yl)-L-homocysteine = (S)-4,5-dihydroxypentane-2,3-dione + L-homocysteine. Functionally, involved in the synthesis of autoinducer 2 (AI-2) which is secreted by bacteria and is used to communicate both the cell density and the metabolic potential of the environment. The regulation of gene expression in response to changes in cell density is called quorum sensing. Catalyzes the transformation of S-ribosylhomocysteine (RHC) to homocysteine (HC) and 4,5-dihydroxy-2,3-pentadione (DPD). This chain is S-ribosylhomocysteine lyase, found in Helicobacter pylori (strain Shi470).